A 320-amino-acid polypeptide reads, in one-letter code: uncharacterized protein (320 aa).

46–53 is an ATP binding site; the sequence is DVPGVGKT.

This sequence belongs to the MoxR family.

This is an uncharacterized protein from Bacillus subtilis (strain 168).